The sequence spans 428 residues: Histidine--tRNA ligase (428 aa).

It belongs to the class-II aminoacyl-tRNA synthetase family. In terms of assembly, homodimer.

The protein localises to the cytoplasm. The enzyme catalyses tRNA(His) + L-histidine + ATP = L-histidyl-tRNA(His) + AMP + diphosphate + H(+). The protein is Histidine--tRNA ligase of Mesomycoplasma hyopneumoniae (strain 7448) (Mycoplasma hyopneumoniae).